An 84-amino-acid chain; its full sequence is Small ribosomal subunit protein bS18 (84 aa).

Belongs to the bacterial ribosomal protein bS18 family. As to quaternary structure, part of the 30S ribosomal subunit. Forms a tight heterodimer with protein bS6.

In terms of biological role, binds as a heterodimer with protein bS6 to the central domain of the 16S rRNA, where it helps stabilize the platform of the 30S subunit. In Dictyoglomus turgidum (strain DSM 6724 / Z-1310), this protein is Small ribosomal subunit protein bS18.